Consider the following 211-residue polypeptide: Ion-translocating oxidoreductase complex subunit G (211 aa).

The helical transmembrane segment at 9 to 29 (GLTLAIFACATTGLVAMTQYL) threads the bilayer. Position 175 is an FMN phosphoryl threonine (T175).

Belongs to the RnfG family. As to quaternary structure, the complex is composed of six subunits: RnfA, RnfB, RnfC, RnfD, RnfE and RnfG. The cofactor is FMN.

The protein resides in the cell inner membrane. Functionally, part of a membrane-bound complex that couples electron transfer with translocation of ions across the membrane. This is Ion-translocating oxidoreductase complex subunit G from Vibrio vulnificus (strain YJ016).